We begin with the raw amino-acid sequence, 20 residues long: AEPLASQLKEPIAGGGWWAA.

As to quaternary structure, monomer. Glycosylated. Stored in epidermis and secreted into the hemolymph and cuticle. Not detected in the interior of the epidermis, fat body cells or columnar or goblet cells of the midgut epithelium (at protein level).

Its function is as follows. Inhibits trypsin and chymotrypsin. This Antheraea mylitta (Tasar silkworm) protein is Protease inhibitor.